Consider the following 389-residue polypeptide: Succinate--CoA ligase [ADP-forming] subunit beta (389 aa).

Residues Lys46, 53–55 (GRG), Glu99, Cys102, and Glu107 contribute to the ATP site. The Mg(2+) site is built by Asn199 and Asp213. Substrate-binding positions include Asn264 and 321–323 (GIV).

Belongs to the succinate/malate CoA ligase beta subunit family. In terms of assembly, heterotetramer of two alpha and two beta subunits. The cofactor is Mg(2+).

The catalysed reaction is succinate + ATP + CoA = succinyl-CoA + ADP + phosphate. It carries out the reaction GTP + succinate + CoA = succinyl-CoA + GDP + phosphate. The protein operates within carbohydrate metabolism; tricarboxylic acid cycle; succinate from succinyl-CoA (ligase route): step 1/1. In terms of biological role, succinyl-CoA synthetase functions in the citric acid cycle (TCA), coupling the hydrolysis of succinyl-CoA to the synthesis of either ATP or GTP and thus represents the only step of substrate-level phosphorylation in the TCA. The beta subunit provides nucleotide specificity of the enzyme and binds the substrate succinate, while the binding sites for coenzyme A and phosphate are found in the alpha subunit. The chain is Succinate--CoA ligase [ADP-forming] subunit beta from Haemophilus influenzae (strain 86-028NP).